We begin with the raw amino-acid sequence, 538 residues long: Chaperonin GroEL (538 aa).

Residues 29-32 (TLGP), 86-90 (DGTTT), G413, 479-481 (DAL), and D495 contribute to the ATP site.

The protein belongs to the chaperonin (HSP60) family. In terms of assembly, forms a cylinder of 14 subunits composed of two heptameric rings stacked back-to-back. Interacts with the co-chaperonin GroES.

Its subcellular location is the cytoplasm. The enzyme catalyses ATP + H2O + a folded polypeptide = ADP + phosphate + an unfolded polypeptide.. Functionally, together with its co-chaperonin GroES, plays an essential role in assisting protein folding. The GroEL-GroES system forms a nano-cage that allows encapsulation of the non-native substrate proteins and provides a physical environment optimized to promote and accelerate protein folding. The protein is Chaperonin GroEL of Thermotoga neapolitana.